A 128-amino-acid chain; its full sequence is Large ribosomal subunit protein bL12 (128 aa).

The protein belongs to the bacterial ribosomal protein bL12 family. In terms of assembly, homodimer. Part of the ribosomal stalk of the 50S ribosomal subunit. Forms a multimeric L10(L12)X complex, where L10 forms an elongated spine to which 2 to 4 L12 dimers bind in a sequential fashion. Binds GTP-bound translation factors.

Its function is as follows. Forms part of the ribosomal stalk which helps the ribosome interact with GTP-bound translation factors. Is thus essential for accurate translation. The chain is Large ribosomal subunit protein bL12 from Saccharopolyspora erythraea (strain ATCC 11635 / DSM 40517 / JCM 4748 / NBRC 13426 / NCIMB 8594 / NRRL 2338).